A 478-amino-acid chain; its full sequence is Antiviral innate immune response effector IFIT1 (478 aa).

TPR repeat units follow at residues 52-85 (VGIH…MQEE), 95-128 (LVTW…CKKL), 141-174 (IDCE…DPEN), 183-216 (ISAY…NPDN), 218-249 (YIKV…NMSS), and 251-284 (TYVF…TPTS). Tryptophan 147 serves as a coordination point for mRNA. Glycine 190 contacts RNA. RNA contacts are provided by lysine 259, histidine 289, glutamine 290, and lysine 336. 4 TPR repeats span residues 305–339 (ATKG…KPTF), 340–373 (EVAH…KPVV), 378–412 (QDIH…EQAS), and 437–470 (LESL…AADF).

This sequence belongs to the IFIT family. In terms of assembly, component of an interferon-dependent multiprotein complex, at least composed of IFIT1, IFIT2 and IFIT3. Interacts (via TPR repeats 1-4) with RPL15. Interacts with STING1/MITA; could disrupt STING1 interaction with MAVS or TBK1, acting as a negative-feedback regulator of virus-triggered signaling. Interacts with EIF3E; this could be an alternative way to inhibit translation. In terms of processing, phosphorylated. Post-translationally, ISGylated.

It localises to the cytoplasm. Functionally, plays a key role in the innate immune response as part of an interferon-dependent multiprotein complex, recognizing and sequestering viral RNAs that lack host-specific 2'-O-methylation at their 5' cap. By distinguishing these RNAs from host mRNAs, inhibits their translation by competing with the translation initiation factor eIF4E. Could also prevent viral replication through its interaction with DNA replication origin-binding protein E1 of several viruses. Causes the translocation of E1 from the nucleus to the cytoplasm and can also inhibit its helicase activity in vitro. Exhibits antiviral activity against many viruses from the Flaviviridae (West Nile virus, Dengue virus, hepatitis C virus), Coronaviridae (human 229E coronavirus, SARS-CoV-2 and SARS-CoV), Poxviridae (vaccinia virus) and Togaviridae (Sindbis virus) families. The protein is Antiviral innate immune response effector IFIT1 of Homo sapiens (Human).